Reading from the N-terminus, the 263-residue chain is Glutamate racemase (263 aa).

Residues 13–14 and 45–46 contribute to the substrate site; these read DS and YG. Residue cysteine 77 is the Proton donor/acceptor of the active site. 78–79 is a substrate binding site; that stretch reads NT. Cysteine 185 serves as the catalytic Proton donor/acceptor. Substrate is bound at residue 186–187; that stretch reads TH.

The protein belongs to the aspartate/glutamate racemases family.

The catalysed reaction is L-glutamate = D-glutamate. Its pathway is cell wall biogenesis; peptidoglycan biosynthesis. Provides the (R)-glutamate required for cell wall biosynthesis. This chain is Glutamate racemase, found in Vibrio vulnificus (strain YJ016).